The chain runs to 235 residues: Sperm annulus positionning complex subunit Chibby3 (235 aa).

A disordered region spans residues 1-41; that stretch reads MADSKMKWGQAWDSSLGTATTSSSSATGSPSPFQNIRVPDT. Over residues 14–32 the composition is skewed to low complexity; sequence SSLGTATTSSSSATGSPSP. Residues 167–181 form a leucine-zipper; mediates homodimerization region; that stretch reads LLEENNYLKLQQELL.

The protein belongs to the chibby family. Homodimer. Interacts with CIBAR1 (via BAR-like domain); both proteins form a ninefold symmetric structure at the flagellar base; are recruited to the annulus in a mutually dependent manner and regulate annulus positionning. As to expression, testis-specific.

The protein resides in the cell projection. It localises to the cilium. It is found in the flagellum. In terms of biological role, plays a key role in the correct positioning of the annulus, a septin-based ring strucure in the sperm flagellum, serving both as a physical barrier and a membrane diffusion barrier that separates the midpiece (MP) from the principal piece (PP). This positioning is essential for proper sperm motility and function. Interacts with CIBAR1 to form a complex which localizes to the curved membrane region of the flagellar pocket. By doing so, may provide stability and rigidity to the periannular membrane to prevent membrane deformation. This function is crucial for halting annulus migration at the proximal end of the fibrous sheath-containing PP. The polypeptide is Sperm annulus positionning complex subunit Chibby3 (Cby3) (Mus musculus (Mouse)).